A 53-amino-acid polypeptide reads, in one-letter code: UPF0391 membrane protein SG0393 (53 aa).

A run of 2 helical transmembrane segments spans residues 4-24 and 27-47; these read WGII…GGLA and AAWA…ISLF.

Belongs to the UPF0391 family.

The protein localises to the cell membrane. The sequence is that of UPF0391 membrane protein SG0393 from Sodalis glossinidius (strain morsitans).